A 339-amino-acid polypeptide reads, in one-letter code: Ureidoglycine carbamoyltransferase (339 aa).

Belongs to the aspartate/ornithine carbamoyltransferase superfamily. As to quaternary structure, homodimer.

It catalyses the reaction (S)-2-ureidoglycine + carbamoyl phosphate = allantoate + phosphate + H(+). It functions in the pathway purine metabolism. Catalyzes the phosphorolysis of allantoate to ureidoglycine and carbamoyl phosphate. Is likely involved in a purine degradation pathway. The chain is Ureidoglycine carbamoyltransferase from Rubrobacter xylanophilus (strain DSM 9941 / JCM 11954 / NBRC 16129 / PRD-1).